The following is a 179-amino-acid chain: Large ribosomal subunit protein uL5c (179 aa).

It belongs to the universal ribosomal protein uL5 family. In terms of assembly, part of the 50S ribosomal subunit; contacts the 5S rRNA.

It is found in the plastid. The protein resides in the chloroplast. Functionally, binds 5S rRNA, forms part of the central protuberance of the 50S subunit. This chain is Large ribosomal subunit protein uL5c (rpl5), found in Gracilaria tenuistipitata var. liui (Red alga).